A 319-amino-acid chain; its full sequence is Thiamine-monophosphate kinase (319 aa).

Asp28, Thr43, Thr44, and Asp45 together coordinate Mg(2+). His52 contacts substrate. Asp73 serves as a coordination point for Mg(2+). ATP contacts are provided by residues Tyr104, 121 to 122 (GD), and Arg145. Residue Asp122 participates in Mg(2+) binding. Position 218 (Asp218) interacts with Mg(2+). Residue Ser220 coordinates ATP. Asp221 is a binding site for Mg(2+). Substrate is bound by residues Glu268 and Tyr315.

The protein belongs to the thiamine-monophosphate kinase family.

It carries out the reaction thiamine phosphate + ATP = thiamine diphosphate + ADP. Its pathway is cofactor biosynthesis; thiamine diphosphate biosynthesis; thiamine diphosphate from thiamine phosphate: step 1/1. Functionally, catalyzes the ATP-dependent phosphorylation of thiamine-monophosphate (TMP) to form thiamine-pyrophosphate (TPP), the active form of vitamin B1. The chain is Thiamine-monophosphate kinase from Methanocaldococcus jannaschii (strain ATCC 43067 / DSM 2661 / JAL-1 / JCM 10045 / NBRC 100440) (Methanococcus jannaschii).